A 343-amino-acid chain; its full sequence is Thiamine thiazole synthase 4, chloroplastic (343 aa).

Residues Ala89, 109–110, Gly117, and Ala182 each bind substrate; that span reads EQ. The residue at position 211 (Cys211) is a 2,3-didehydroalanine (Cys). Residues Asp213, His228, Met280, and 290–292 contribute to the substrate site; that span reads RMG.

The protein belongs to the THI4 family. As to quaternary structure, homooctamer. The cofactor is Fe cation. During the catalytic reaction, a sulfide is transferred from Cys-211 to a reaction intermediate, generating a dehydroalanine residue.

The protein resides in the plastid. The protein localises to the chloroplast. The enzyme catalyses [ADP-thiazole synthase]-L-cysteine + glycine + NAD(+) = [ADP-thiazole synthase]-dehydroalanine + ADP-5-ethyl-4-methylthiazole-2-carboxylate + nicotinamide + 3 H2O + 2 H(+). In terms of biological role, involved in biosynthesis of the thiamine precursor thiazole. Catalyzes the conversion of NAD and glycine to adenosine diphosphate 5-(2-hydroxyethyl)-4-methylthiazole-2-carboxylic acid (ADT), an adenylated thiazole intermediate. The reaction includes an iron-dependent sulfide transfer from a conserved cysteine residue of the protein to a thiazole intermediate. The enzyme can only undergo a single turnover, which suggests it is a suicide enzyme. May have additional roles in adaptation to various stress conditions and in DNA damage tolerance. This is Thiamine thiazole synthase 4, chloroplastic from Physcomitrium patens (Spreading-leaved earth moss).